The primary structure comprises 723 residues: Catalase-peroxidase (723 aa).

The segment at residues 98–226 is a cross-link (tryptophyl-tyrosyl-methioninium (Trp-Tyr) (with M-252)); the sequence is WHAAGSYRAA…LAAVQMGLIY (129 aa). Catalysis depends on H99, which acts as the Proton acceptor. The segment at residues 226 to 252 is a cross-link (tryptophyl-tyrosyl-methioninium (Tyr-Met) (with W-98)); sequence YVNPEGVNGKPDPLKTAAQVRETFARM. Residue H267 participates in heme b binding. Residues 267–286 are disordered; that stretch reads HTVGKTHGNGRAENLGPSPE.

This sequence belongs to the peroxidase family. Peroxidase/catalase subfamily. Homodimer or homotetramer. Heme b serves as cofactor. In terms of processing, formation of the three residue Trp-Tyr-Met cross-link is important for the catalase, but not the peroxidase activity of the enzyme.

The catalysed reaction is H2O2 + AH2 = A + 2 H2O. It catalyses the reaction 2 H2O2 = O2 + 2 H2O. Its function is as follows. Bifunctional enzyme with both catalase and broad-spectrum peroxidase activity. The polypeptide is Catalase-peroxidase (Thioalkalivibrio sulfidiphilus (strain HL-EbGR7)).